Reading from the N-terminus, the 608-residue chain is DNA mismatch repair protein MutL (608 aa).

The protein belongs to the DNA mismatch repair MutL/HexB family.

This protein is involved in the repair of mismatches in DNA. It is required for dam-dependent methyl-directed DNA mismatch repair. May act as a 'molecular matchmaker', a protein that promotes the formation of a stable complex between two or more DNA-binding proteins in an ATP-dependent manner without itself being part of a final effector complex. The polypeptide is DNA mismatch repair protein MutL (Anoxybacillus flavithermus (strain DSM 21510 / WK1)).